The sequence spans 230 residues: Androgen-dependent TFPI-regulating protein (230 aa).

Residues 1–7 (MTKTTTC) are Cytoplasmic-facing. Residues 8–28 (LYHFVVLNWYIFLNYYIPQIG) traverse the membrane as a helical segment. The Extracellular segment spans residues 29-45 (KDEEKLKEFHDGGRSKY). A helical transmembrane segment spans residues 46–66 (LTLLNLLLQAVFFGVACLDDV). Over 67-85 (LKRVIGRKDIKFITYFRDL) the chain is Cytoplasmic. Residues 86–106 (LFTTLAFPLSTFVFLVFWSLF) form a helical membrane-spanning segment. The Extracellular portion of the chain corresponds to 107 to 120 (HYDRSLVYPKGLDD). A helical transmembrane segment spans residues 121-141 (FFPAWVNHAMHTSIFPFSLAE). The Cytoplasmic portion of the chain corresponds to 142–155 (TVLRPHNYPSKKLG). The chain crosses the membrane as a helical span at residues 156-173 (LSLLGACNFAYIIRILWR). Residues 174–190 (YVQTGNWVYPVFASLSP) are Extracellular-facing. Residues 191-211 (LGIILFFSASYILSASLYLFG) traverse the membrane as a helical segment. At 212–230 (EKINHWKWGATVKPRMKKN) the chain is on the cytoplasmic side.

Belongs to the AIG1 family.

The protein resides in the cell membrane. The enzyme catalyses 9-hexadecanoyloxy-octadecanoate + H2O = 9-hydroxy-octadecanoate + hexadecanoate + H(+). The catalysed reaction is 12-hexadecanoyloxy-octadecanoate + H2O = 12-hydroxyoctadecanoate + hexadecanoate + H(+). It carries out the reaction 9-(9Z-hexadecenoyloxy)-octadecanoate + H2O = (9Z)-hexadecenoate + 9-hydroxy-octadecanoate + H(+). It catalyses the reaction 12-(9Z-hexadecenoyloxy)-octadecanoate + H2O = 12-hydroxyoctadecanoate + (9Z)-hexadecenoate + H(+). The enzyme catalyses 13-(9Z-hexadecenoyloxy)-octadecanoate + H2O = 13-hydroxy-octadecanoate + (9Z)-hexadecenoate + H(+). The catalysed reaction is 9-octadecanoyloxy-octadecanoate + H2O = 9-hydroxy-octadecanoate + octadecanoate + H(+). It carries out the reaction 12-octadecanoyloxy-octadecanoate + H2O = 12-hydroxyoctadecanoate + octadecanoate + H(+). It catalyses the reaction 13-octadecanoyloxy-octadecanoate + H2O = 13-hydroxy-octadecanoate + octadecanoate + H(+). The enzyme catalyses 9-(9Z-octadecenoyloxy)-octadecanoate + H2O = 9-hydroxy-octadecanoate + (9Z)-octadecenoate + H(+). The catalysed reaction is 12-(9Z-octadecenoyloxy)-octadecanoate + H2O = 12-hydroxyoctadecanoate + (9Z)-octadecenoate + H(+). It carries out the reaction 13-(9Z-octadecenoyloxy)-octadecanoate + H2O = 13-hydroxy-octadecanoate + (9Z)-octadecenoate + H(+). It catalyses the reaction 5-(9Z-octadecenoyloxy)-octadecanoate + H2O = 5-hydroxy-octadecanoate + (9Z)-octadecenoate + H(+). Hydrolyzes bioactive fatty-acid esters of hydroxy-fatty acids (FAHFAs), but not other major classes of lipids. Shows a preference for FAHFAs with branching distal from the carboxylate head group of the lipids. Regulates the expression and the cell-associated anticoagulant activity of the inhibitor TFPI in endothelial cells (in vitro). This Rattus norvegicus (Rat) protein is Androgen-dependent TFPI-regulating protein (Adtrp).